A 402-amino-acid chain; its full sequence is MKRTFILMMDSFGIGAAADADKFGDVGANTLGHIAKACAAGDIEGRSALNLPNLNKLGLGHAGELASGYFPAGLKKDIEVVGAYGFAQELSSGKDTPSGHWEIAGVPVLFEWGYFKDHHNSFPQELLDAIVEKAGLSGYLGNCHASGTQVLDDLGEEHMSTGKPILYTSADSVFQIACHEETYGLEKLYELCHIVRELLEPYNIGRVIARPFVGSGKGNFKRTGNRHDYSVLPPAPTVLDYMKEAGGQVVSIGKIADIYANKGITKQVKGTGLTELWDRTLEEVKAAGDNTIVFTNFVDFDSSYGHRRDVKGYADALEYFDSRLPELFEILQDGDVVVLTADHGCDPTWGGTDHTREYIPVLFFGKPVKAGSVGRRETFADIGQSIAAYHGLPKLEYGTSFL.

The Mn(2+) site is built by Asp10, Asp301, His306, Asp342, His343, and His354.

It belongs to the phosphopentomutase family. It depends on Mn(2+) as a cofactor.

The protein resides in the cytoplasm. It carries out the reaction 2-deoxy-alpha-D-ribose 1-phosphate = 2-deoxy-D-ribose 5-phosphate. The catalysed reaction is alpha-D-ribose 1-phosphate = D-ribose 5-phosphate. It participates in carbohydrate degradation; 2-deoxy-D-ribose 1-phosphate degradation; D-glyceraldehyde 3-phosphate and acetaldehyde from 2-deoxy-alpha-D-ribose 1-phosphate: step 1/2. Functionally, isomerase that catalyzes the conversion of deoxy-ribose 1-phosphate (dRib-1-P) and ribose 1-phosphate (Rib-1-P) to deoxy-ribose 5-phosphate (dRib-5-P) and ribose 5-phosphate (Rib-5-P), respectively. The polypeptide is Phosphopentomutase (Aeromonas salmonicida (strain A449)).